Here is a 159-residue protein sequence, read N- to C-terminus: Short coiled-coil protein (159 aa).

The stretch at 78–146 forms a coiled coil; sequence MMNADMDAVD…QYIENLMSAS (69 aa).

Belongs to the SCOC family. As to quaternary structure, homodimer. Interacts with ARL1, ARL2 and ARL3. Directly interacts with FEZ1 and UVRAG. The interaction with UVRAG is reduced by amino acid starvation, but the complex is stabilized in the presence of FEZ1. Interacts with NRBF2. In terms of tissue distribution, widely expressed with highest levels in brain, heart and skeletal muscle.

The protein resides in the golgi apparatus membrane. The protein localises to the golgi apparatus. Its subcellular location is the trans-Golgi network. It localises to the cytoplasm. It is found in the cytosol. Positive regulator of amino acid starvation-induced autophagy. The protein is Short coiled-coil protein (SCOC) of Homo sapiens (Human).